We begin with the raw amino-acid sequence, 110 residues long: Translation initiation factor 1A 3 (110 aa).

The tract at residues 1 to 29 is disordered; sequence MIRKRQSGSNKSVSSGNNQEVTRVRTPRK. Positions 7–18 are enriched in low complexity; sequence SGSNKSVSSGNN. One can recognise an S1-like domain in the interval 22-96; that stretch reads TRVRTPRKDR…SKADVIWKYT (75 aa).

Belongs to the eIF-1A family.

Its function is as follows. Seems to be required for maximal rate of protein biosynthesis. Enhances ribosome dissociation into subunits and stabilizes the binding of the initiator Met-tRNA(I) to 40 S ribosomal subunits. The sequence is that of Translation initiation factor 1A 3 (eIF1A3) from Methanosarcina acetivorans (strain ATCC 35395 / DSM 2834 / JCM 12185 / C2A).